The following is a 294-amino-acid chain: Cytidine deaminase (294 aa).

CMP/dCMP-type deaminase domains are found at residues 48 to 168 (DEDA…FGPK) and 186 to 294 (LTGD…VLLG). 89-91 (NME) is a binding site for substrate. Residue His102 coordinates Zn(2+). Residue Glu104 is the Proton donor of the active site. Cys129 and Cys132 together coordinate Zn(2+).

This sequence belongs to the cytidine and deoxycytidylate deaminase family. In terms of assembly, homodimer. Zn(2+) serves as cofactor.

It carries out the reaction cytidine + H2O + H(+) = uridine + NH4(+). The enzyme catalyses 2'-deoxycytidine + H2O + H(+) = 2'-deoxyuridine + NH4(+). This enzyme scavenges exogenous and endogenous cytidine and 2'-deoxycytidine for UMP synthesis. In Salmonella newport (strain SL254), this protein is Cytidine deaminase.